A 943-amino-acid polypeptide reads, in one-letter code: Isoleucine--tRNA ligase (943 aa).

A 'HIGH' region motif is present at residues 58-68; it reads PYANGKIHIGH. E567 is an L-isoleucyl-5'-AMP binding site. A 'KMSKS' region motif is present at residues 608 to 612; that stretch reads KMSKS. Residue K611 coordinates ATP. 4 residues coordinate Zn(2+): C906, C909, C926, and C929.

This sequence belongs to the class-I aminoacyl-tRNA synthetase family. IleS type 1 subfamily. In terms of assembly, monomer. It depends on Zn(2+) as a cofactor.

Its subcellular location is the cytoplasm. It carries out the reaction tRNA(Ile) + L-isoleucine + ATP = L-isoleucyl-tRNA(Ile) + AMP + diphosphate. Its function is as follows. Catalyzes the attachment of isoleucine to tRNA(Ile). As IleRS can inadvertently accommodate and process structurally similar amino acids such as valine, to avoid such errors it has two additional distinct tRNA(Ile)-dependent editing activities. One activity is designated as 'pretransfer' editing and involves the hydrolysis of activated Val-AMP. The other activity is designated 'posttransfer' editing and involves deacylation of mischarged Val-tRNA(Ile). The protein is Isoleucine--tRNA ligase of Pseudomonas entomophila (strain L48).